A 226-amino-acid chain; its full sequence is Putative ABC transporter ATP-binding protein BH02760 (226 aa).

The ABC transporter domain maps to 4–222 (IKFDKVTQVF…IPLVAIKEYI (219 aa)). Position 35-42 (35-42 (GANGSGKS)) interacts with ATP.

The protein belongs to the ABC transporter superfamily.

Its subcellular location is the cell inner membrane. Its function is as follows. Probably part of an ABC transporter complex. Responsible for energy coupling to the transport system. This chain is Putative ABC transporter ATP-binding protein BH02760, found in Bartonella henselae (strain ATCC 49882 / DSM 28221 / CCUG 30454 / Houston 1) (Rochalimaea henselae).